Here is a 262-residue protein sequence, read N- to C-terminus: MSLIHSTAIVDPKAQLDTSVEVGAYSVIGPHVKIDAGSKIGPHVVVEGHTTIGRDNTIFQFASIGAAPQDKKYAGEPTQLSIGDRNTIREFVTINLGTTQDANITRLGSDNWIMAYVHIAHDCQLGDNIILANNATLAGHVHLEDWVFLGGFTSVHQFCRIGAHAMTAFTAAVSQDIPPFVTAAGNRAVPAGINSEGLKRRGFSSEQIMAIKRGYKIIYRSNLPLEEAKAALLAEENKSSDAAPYLRQLRTFIETSPRGIIR.

The protein belongs to the transferase hexapeptide repeat family. LpxA subfamily. As to quaternary structure, homotrimer.

It localises to the cytoplasm. It catalyses the reaction a (3R)-hydroxyacyl-[ACP] + UDP-N-acetyl-alpha-D-glucosamine = a UDP-3-O-[(3R)-3-hydroxyacyl]-N-acetyl-alpha-D-glucosamine + holo-[ACP]. Its pathway is glycolipid biosynthesis; lipid IV(A) biosynthesis; lipid IV(A) from (3R)-3-hydroxytetradecanoyl-[acyl-carrier-protein] and UDP-N-acetyl-alpha-D-glucosamine: step 1/6. Involved in the biosynthesis of lipid A, a phosphorylated glycolipid that anchors the lipopolysaccharide to the outer membrane of the cell. The chain is Acyl-[acyl-carrier-protein]--UDP-N-acetylglucosamine O-acyltransferase from Herminiimonas arsenicoxydans.